The chain runs to 513 residues: Maturase K (513 aa).

This sequence belongs to the intron maturase 2 family. MatK subfamily.

The protein resides in the plastid. It localises to the chloroplast. Functionally, usually encoded in the trnK tRNA gene intron. Probably assists in splicing its own and other chloroplast group II introns. This is Maturase K from Zea mays (Maize).